The primary structure comprises 311 residues: JNK1/MAPK8-associated membrane protein (311 aa).

The Lumenal segment spans residues 1–57 (MAVDIQPACLGLYCGKTLLFKNGSTEIYGECGVCPRGQRTNAQKYCQPCTESPELYD). An N-linked (GlcNAc...) asparagine glycan is attached at asparagine 22. The helical transmembrane segment at 58 to 78 (WLYLGFMAMLPLVLHWFFIEW) threads the bilayer. Residues 79-87 (YSGKKSSSA) lie on the Cytoplasmic side of the membrane. A helical membrane pass occupies residues 88 to 108 (LFQHITALFECSMAAIITLLV). The Lumenal segment spans residues 109–149 (SDPVGVLYIRSCRVLMLSDWYTMLYNPSPDYVTTVHCTHEA). The helical transmembrane segment at 150 to 170 (VYPLYTIVFIYYAFCLVLMML) threads the bilayer. The Cytoplasmic segment spans residues 171–188 (LRPLLVKKIACGLGKSDR). The helical transmembrane segment at 189 to 209 (FKSIYAALYFFPILTVLQAVG) threads the bilayer. Glycine 210 is a topological domain (lumenal). A helical membrane pass occupies residues 211–231 (GLLYYAFPYIILVLSLVTLAV). Topologically, residues 232–250 (YMSASEIENCYDLLVRKKR) are cytoplasmic. A helical membrane pass occupies residues 251–271 (LIVLFSHWLLHAYGIISISRV). The Lumenal segment spans residues 272–277 (DKLEQD). The chain crosses the membrane as a helical span at residues 278 to 298 (LPLLALVPTPALFYLFTAKFT). The Cytoplasmic portion of the chain corresponds to 299–311 (EPSRILSEGANGH).

Interacts with RNF5 and MAPK8, but not with MAPK9. Binding to MAPK8 occurs before and after exposure to stress, such as UV irradiation. After exposure to stress, interacts with phosphorylated MAPK8. Competes with DUSP10 for MAPK8 binding. Associates with multiple components of the proteasome and with ERAD regulatory proteins including AMFR/GP78, CANX, PSMC1, PSMC2, PSMC3/TBP1, PSMC5, PSMC6, PSMD8, SEC61-ALPHA and UFD1. Interacts with DERL1 (in the presence of misfolded protein CFTR(F508del)). In terms of processing, ubiquitinated by RNF5 via 'Lys-63'-linked ubiquitin linkage in a UBE2N-dependent manner. Ubiquitination decreases association with components of the proteasome and ERAD.

The protein resides in the endoplasmic reticulum membrane. In terms of biological role, regulates the duration of MAPK8 activity in response to various stress stimuli. Facilitates degradation of misfolded endoplasmic reticulum (ER) proteins through the recruitment of components of the proteasome and endoplasmic reticulum-associated degradation (ERAD) system. The sequence is that of JNK1/MAPK8-associated membrane protein (JKAMP) from Homo sapiens (Human).